We begin with the raw amino-acid sequence, 358 residues long: Putative KilA-N domain-containing protein 313L (358 aa).

The region spanning 15–124 is the KilA-N domain; the sequence is NFYYGLFGDF…DKCNQIVIDF (110 aa). The stretch at 126–245 forms a coiled coil; sequence VVEFKEKEKE…VKLEISVEDR (120 aa).

The protein belongs to the IIV-6 006L/238R/313L/468L family.

The sequence is that of Putative KilA-N domain-containing protein 313L from Acheta domesticus (House cricket).